A 491-amino-acid polypeptide reads, in one-letter code: Endoglucanase 14 (491 aa).

The signal sequence occupies residues 1-31 (MSQLKIGSSQCLWTSICIVLFVLSMARGAVS). The Nucleophile role is filled by D86. N-linked (GlcNAc...) asparagine glycosylation occurs at N397. Residues H413, D465, and E474 contribute to the active site.

Belongs to the glycosyl hydrolase 9 (cellulase E) family.

Its subcellular location is the secreted. The catalysed reaction is Endohydrolysis of (1-&gt;4)-beta-D-glucosidic linkages in cellulose, lichenin and cereal beta-D-glucans.. This is Endoglucanase 14 from Arabidopsis thaliana (Mouse-ear cress).